The chain runs to 194 residues: uncharacterized protein (194 aa).

2 disordered regions span residues lysine 52 to lysine 71 and alanine 86 to serine 194. Composition is skewed to polar residues over residues glycine 53 to glutamate 63, alanine 98 to asparagine 111, and isoleucine 119 to alanine 132. Residues asparagine 133–serine 169 show a composition bias toward basic residues. The segment covering serine 175–serine 194 has biased composition (basic and acidic residues).

This is an uncharacterized protein from Schizosaccharomyces pombe (strain 972 / ATCC 24843) (Fission yeast).